We begin with the raw amino-acid sequence, 277 residues long: Pantothenate synthetase (277 aa).

26 to 33 (MGNLHEGH) lines the ATP pocket. Catalysis depends on His-33, which acts as the Proton donor. Gln-57 contributes to the (R)-pantoate binding site. Gln-57 is a beta-alanine binding site. ATP is bound at residue 144 to 147 (GKKD). Gln-150 is a binding site for (R)-pantoate. ATP-binding positions include Val-173 and 181-184 (LSSR).

The protein belongs to the pantothenate synthetase family. As to quaternary structure, homodimer.

The protein localises to the cytoplasm. The catalysed reaction is (R)-pantoate + beta-alanine + ATP = (R)-pantothenate + AMP + diphosphate + H(+). The protein operates within cofactor biosynthesis; (R)-pantothenate biosynthesis; (R)-pantothenate from (R)-pantoate and beta-alanine: step 1/1. Its function is as follows. Catalyzes the condensation of pantoate with beta-alanine in an ATP-dependent reaction via a pantoyl-adenylate intermediate. The protein is Pantothenate synthetase of Paraburkholderia xenovorans (strain LB400).